A 362-amino-acid polypeptide reads, in one-letter code: Cobalt-precorrin-5B C(1)-methyltransferase (362 aa).

This sequence belongs to the CbiD family.

The catalysed reaction is Co-precorrin-5B + S-adenosyl-L-methionine = Co-precorrin-6A + S-adenosyl-L-homocysteine. It functions in the pathway cofactor biosynthesis; adenosylcobalamin biosynthesis; cob(II)yrinate a,c-diamide from sirohydrochlorin (anaerobic route): step 6/10. In terms of biological role, catalyzes the methylation of C-1 in cobalt-precorrin-5B to form cobalt-precorrin-6A. The sequence is that of Cobalt-precorrin-5B C(1)-methyltransferase from Synechococcus sp. (strain CC9902).